We begin with the raw amino-acid sequence, 534 residues long: Protein BFR2 (534 aa).

Residues 27–148 (ENASLFQHNE…ETEEAQQKRH (122 aa)) are disordered. 2 positions are modified to phosphoserine: Ser-41 and Ser-44. Residues 52–77 (EETKKAHYLEVEKSKLRAEKGLELND) are compositionally biased toward basic and acidic residues. The stretch at 86–161 (SRQALYEEVS…KLIQQETKQA (76 aa)) forms a coiled coil. Acidic residues-rich tracts occupy residues 93–114 (EVSE…EEDA) and 121–142 (SEDE…ETEE). A phosphoserine mark is found at Ser-366, Ser-372, and Ser-379.

Belongs to the AATF family.

The protein resides in the nucleus. It localises to the nucleolus. In terms of biological role, involved in endoplasmic reticulum to Golgi transport. Involved in a protein-transport step blocked by brefeldin A, which disrupts the Golgi apparatus and its incoming protein flux. May also be involved for mass growth or cell proliferation. The chain is Protein BFR2 (BFR2) from Saccharomyces cerevisiae (strain ATCC 204508 / S288c) (Baker's yeast).